The primary structure comprises 296 residues: Acetylglutamate kinase (296 aa).

Substrate is bound by residues 69 to 70 (GG), Arg-91, and Asn-193.

It belongs to the acetylglutamate kinase family. ArgB subfamily.

The protein localises to the cytoplasm. The enzyme catalyses N-acetyl-L-glutamate + ATP = N-acetyl-L-glutamyl 5-phosphate + ADP. Its pathway is amino-acid biosynthesis; L-arginine biosynthesis; N(2)-acetyl-L-ornithine from L-glutamate: step 2/4. Functionally, catalyzes the ATP-dependent phosphorylation of N-acetyl-L-glutamate. This chain is Acetylglutamate kinase, found in Albidiferax ferrireducens (strain ATCC BAA-621 / DSM 15236 / T118) (Rhodoferax ferrireducens).